We begin with the raw amino-acid sequence, 339 residues long: RNA polymerase II holoenzyme cyclin-like subunit (339 aa).

Residues 48–67 are disordered; sequence PNSADSSNGNAANNGGGNGR. The span at 49 to 60 shows a compositional bias: low complexity; the sequence is NSADSSNGNAAN. Positions 93-194 constitute a Cyclin N-terminal domain; the sequence is RIYCYFLIMK…LIEELQCYLI (102 aa).

It belongs to the cyclin family. Cyclin C subfamily. As to quaternary structure, component of the SRB8-11 complex, a regulatory module of the Mediator complex.

The protein resides in the nucleus. Functionally, component of the SRB8-11 complex. The SRB8-11 complex is a regulatory module of the Mediator complex which is itself involved in regulation of basal and activated RNA polymerase II-dependent transcription. The SRB8-11 complex may be involved in the transcriptional repression of a subset of genes regulated by Mediator. It may inhibit the association of the Mediator complex with RNA polymerase II to form the holoenzyme complex. The SRB8-11 complex phosphorylates the C-terminal domain (CTD) of the largest subunit of RNA polymerase II. This is RNA polymerase II holoenzyme cyclin-like subunit (SSN8) from Candida glabrata (strain ATCC 2001 / BCRC 20586 / JCM 3761 / NBRC 0622 / NRRL Y-65 / CBS 138) (Yeast).